The chain runs to 100 residues: MGNSKSKSKLSANQYEQQTVNSTKQVAILKRQAEPSLYGRHNCRCCWFANTNLIKCSDHYICLKCLNIMLGKSSFCDICGEELPTSIVVPIEPSAPPPED.

The N-myristoyl glycine; by host moiety is linked to residue Gly-2. The RING-type; atypical zinc-finger motif lies at Cys-43 to Cys-79. The PTAP/PSAP motif motif lies at Pro-93–Pro-96.

The protein belongs to the arenaviridae Z protein family. Interacts with protein NP; this interaction probably directs the encapsidated genome to budding sites. Interacts (via RING domain) with polymerase L; this interaction inhibits viral transcription and replication, Z partially blocks the product exit tunnel for the releasing nascent RNA product. Interacts with the glycoprotein complex; this interaction plays a role in virion budding. Interacts with host eIF4E; this interaction results in eIF4E reduced affinity for its substrate, the 5'-m7 G cap structure. Interacts (via late-budding domain) with host TSG101; this interaction is essential for budding and release of viral particles. Interacts with host RPLP0; this interaction may serve to load ribosome-like particles inside the virion. Interacts with host PML; this interaction induces PML bodies redistribution in the cytoplasm upon viral infection. Post-translationally, myristoylation is required for the role of RING finger protein Z in assembly and budding.

It is found in the virion. Its subcellular location is the host cytoplasm. The protein resides in the host perinuclear region. It localises to the host cell membrane. Plays a crucial role in virion assembly and budding. Expressed late in the virus life cycle, it acts as an inhibitor of viral transcription and RNA synthesis by interacting with the viral polymerase L. Presumably recruits the NP encapsidated genome to cellular membranes at budding sites via direct interaction with NP. Plays critical roles in the final steps of viral release by interacting with host TSG101, a member of the vacuolar protein-sorting pathway and using other cellular host proteins involved in vesicle formation pathway. The budding of the virus progeny occurs after association of protein Z with the viral glycoprotein complex SSP-GP1-GP2 at the cell periphery, step that requires myristoylation of protein Z. Also selectively represses protein production by associating with host eIF4E. In cell-based minigenome assay, has an inhibitory effect on the ribonucleoprotein machinery (vRNP), which is responsible for the replication and transcription of the viral genome. The polypeptide is RING finger protein Z (Homo sapiens (Human)).